The following is a 451-amino-acid chain: tRNA-2-methylthio-N(6)-dimethylallyladenosine synthase (451 aa).

The region spanning 3–120 (LKLHIKTYGC…LPEMINHVRI (118 aa)) is the MTTase N-terminal domain. The [4Fe-4S] cluster site is built by C12, C49, C83, C157, C161, and C164. In terms of domain architecture, Radical SAM core spans 143 to 375 (QAKGPTAFVS…QECIRKQAMK (233 aa)). The 64-residue stretch at 378–441 (QAMKGTVQCI…SNSLRGELIS (64 aa)) folds into the TRAM domain.

This sequence belongs to the methylthiotransferase family. MiaB subfamily. As to quaternary structure, monomer. [4Fe-4S] cluster serves as cofactor.

The protein resides in the cytoplasm. The enzyme catalyses N(6)-dimethylallyladenosine(37) in tRNA + (sulfur carrier)-SH + AH2 + 2 S-adenosyl-L-methionine = 2-methylsulfanyl-N(6)-dimethylallyladenosine(37) in tRNA + (sulfur carrier)-H + 5'-deoxyadenosine + L-methionine + A + S-adenosyl-L-homocysteine + 2 H(+). Catalyzes the methylthiolation of N6-(dimethylallyl)adenosine (i(6)A), leading to the formation of 2-methylthio-N6-(dimethylallyl)adenosine (ms(2)i(6)A) at position 37 in tRNAs that read codons beginning with uridine. The sequence is that of tRNA-2-methylthio-N(6)-dimethylallyladenosine synthase from Baumannia cicadellinicola subsp. Homalodisca coagulata.